The chain runs to 360 residues: Peptide chain release factor 1 (360 aa).

At Gln-235 the chain carries N5-methylglutamine. The interval 286-311 (QAQAQADTRRNLLGSGDRSDKIRTYN) is disordered.

The protein belongs to the prokaryotic/mitochondrial release factor family. Methylated by PrmC. Methylation increases the termination efficiency of RF1.

It localises to the cytoplasm. Functionally, peptide chain release factor 1 directs the termination of translation in response to the peptide chain termination codons UAG and UAA. The chain is Peptide chain release factor 1 from Histophilus somni (strain 2336) (Haemophilus somnus).